A 592-amino-acid chain; its full sequence is UvrABC system protein C (592 aa).

The GIY-YIG domain occupies 14–91 (KKPGCYLWKN…IKKHKPRYNI (78 aa)). The UVR domain occupies 197–232 (DQVLKDLKEKESIASEKFDFEQAKKYLDLQKAINLI).

This sequence belongs to the UvrC family. As to quaternary structure, interacts with UvrB in an incision complex.

The protein localises to the cytoplasm. In terms of biological role, the UvrABC repair system catalyzes the recognition and processing of DNA lesions. UvrC both incises the 5' and 3' sides of the lesion. The N-terminal half is responsible for the 3' incision and the C-terminal half is responsible for the 5' incision. In Mycoplasmoides gallisepticum (strain R(low / passage 15 / clone 2)) (Mycoplasma gallisepticum), this protein is UvrABC system protein C.